The following is a 239-amino-acid chain: Fatty acid metabolism regulator protein (239 aa).

One can recognise an HTH gntR-type domain in the interval 6-74; the sequence is QSPAGFAEEY…HGKPTKVNNF (69 aa). Positions 34-53 form a DNA-binding region, H-T-H motif; sequence ERELSELIGVTRTTLREVLQ.

In terms of assembly, homodimer.

It localises to the cytoplasm. Its function is as follows. Multifunctional regulator of fatty acid metabolism. This Yersinia pseudotuberculosis serotype O:1b (strain IP 31758) protein is Fatty acid metabolism regulator protein.